Here is a 775-residue protein sequence, read N- to C-terminus: Endothelin-converting enzyme-like 1 (775 aa).

Residues 1–59 (MEPPYSLTAHYDEFQEVKYVSRCGAGGARGASLPPGFPLGAARSATGARSGLPRWNRRE) are Cytoplasmic-facing. The chain crosses the membrane as a helical; Signal-anchor for type II membrane protein span at residues 60 to 82 (VCLLSGLVFAAGLCAILAAMLAL). Topologically, residues 83–775 (KYLGPVAAGG…MNPAHKCSVW (693 aa)) are lumenal. Residues 98-775 (GCPERKAFAR…MNPAHKCSVW (678 aa)) form the Peptidase M13 domain. 4 disulfides stabilise this stretch: cysteine 123/cysteine 760, cysteine 131/cysteine 720, cysteine 187/cysteine 441, and cysteine 649/cysteine 772. N-linked (GlcNAc...) asparagine glycans are attached at residues asparagine 255 and asparagine 322. Position 612 (histidine 612) interacts with Zn(2+). Glutamate 613 is an active-site residue. Histidine 616 provides a ligand contact to Zn(2+). Asparagine 656 carries N-linked (GlcNAc...) asparagine glycosylation. Glutamate 672 serves as a coordination point for Zn(2+). Aspartate 676 (proton donor) is an active-site residue.

Belongs to the peptidase M13 family. Requires Zn(2+) as cofactor. In terms of processing, N-glycosylated. In terms of tissue distribution, highly expressed in the CNS, in particular in putamen, spinal cord, medulla and subthalamic nucleus. A strong signal was also detected in uterine subepithelial cells and around renal blood vessels. Detected at lower levels in amygdala, caudate, thalamus, pancreas and skeletal muscle. Detected at very low levels in substantia nigra, cerebellum, cortex, corpus callosum and hippocampus.

The protein resides in the membrane. May contribute to the degradation of peptide hormones and be involved in the inactivation of neuronal peptides. In Homo sapiens (Human), this protein is Endothelin-converting enzyme-like 1 (ECEL1).